A 258-amino-acid chain; its full sequence is Imidazole glycerol phosphate synthase subunit HisF (258 aa).

Catalysis depends on residues Asp-11 and Asp-130.

It belongs to the HisA/HisF family. Heterodimer of HisH and HisF.

The protein resides in the cytoplasm. The enzyme catalyses 5-[(5-phospho-1-deoxy-D-ribulos-1-ylimino)methylamino]-1-(5-phospho-beta-D-ribosyl)imidazole-4-carboxamide + L-glutamine = D-erythro-1-(imidazol-4-yl)glycerol 3-phosphate + 5-amino-1-(5-phospho-beta-D-ribosyl)imidazole-4-carboxamide + L-glutamate + H(+). It participates in amino-acid biosynthesis; L-histidine biosynthesis; L-histidine from 5-phospho-alpha-D-ribose 1-diphosphate: step 5/9. Functionally, IGPS catalyzes the conversion of PRFAR and glutamine to IGP, AICAR and glutamate. The HisF subunit catalyzes the cyclization activity that produces IGP and AICAR from PRFAR using the ammonia provided by the HisH subunit. The chain is Imidazole glycerol phosphate synthase subunit HisF from Magnetococcus marinus (strain ATCC BAA-1437 / JCM 17883 / MC-1).